Here is a 99-residue protein sequence, read N- to C-terminus: Small ribosomal subunit protein bS20 (99 aa).

This sequence belongs to the bacterial ribosomal protein bS20 family.

Its function is as follows. Binds directly to 16S ribosomal RNA. The protein is Small ribosomal subunit protein bS20 of Caldicellulosiruptor saccharolyticus (strain ATCC 43494 / DSM 8903 / Tp8T 6331).